The chain runs to 313 residues: Ribosomal RNA small subunit methyltransferase H (313 aa).

S-adenosyl-L-methionine contacts are provided by residues 34-36 (GGH), Asp-53, Phe-80, Asp-101, and Gln-108.

It belongs to the methyltransferase superfamily. RsmH family.

It localises to the cytoplasm. It carries out the reaction cytidine(1402) in 16S rRNA + S-adenosyl-L-methionine = N(4)-methylcytidine(1402) in 16S rRNA + S-adenosyl-L-homocysteine + H(+). Specifically methylates the N4 position of cytidine in position 1402 (C1402) of 16S rRNA. The polypeptide is Ribosomal RNA small subunit methyltransferase H (Lacticaseibacillus paracasei (strain ATCC 334 / BCRC 17002 / CCUG 31169 / CIP 107868 / KCTC 3260 / NRRL B-441) (Lactobacillus paracasei)).